Consider the following 628-residue polypeptide: Chaperone protein HtpG (628 aa).

Positions Met-1–Arg-337 are a; substrate-binding. The tract at residues Glu-338–Lys-554 is b. A c region spans residues Met-555 to Arg-628.

The protein belongs to the heat shock protein 90 family. Homodimer.

It localises to the cytoplasm. Molecular chaperone. Has ATPase activity. In Francisella tularensis subsp. holarctica (strain FTNF002-00 / FTA), this protein is Chaperone protein HtpG.